The sequence spans 128 residues: Early 3 14.7 kDa protein (128 aa).

It belongs to the adenoviridae E3_15 family. As to quaternary structure, may bind to host IKBKG, OPTN and RRAGA.

Its subcellular location is the host cytoplasm. The protein resides in the host nucleus. May prevent Nf-kappaB activation by immune signals like Tumor necrosis factor, presumably by inhibiting NFKB1 dimer DNA-binding. May act directly at the TNF receptor to inhibit signaling. This chain is Early 3 14.7 kDa protein, found in Human adenovirus C serotype 2 (HAdV-2).